Reading from the N-terminus, the 136-residue chain is Holo-[acyl-carrier-protein] synthase (136 aa).

Mg(2+) contacts are provided by Asp8 and Glu57.

The protein belongs to the P-Pant transferase superfamily. AcpS family. Mg(2+) serves as cofactor.

It localises to the cytoplasm. It carries out the reaction apo-[ACP] + CoA = holo-[ACP] + adenosine 3',5'-bisphosphate + H(+). Its function is as follows. Transfers the 4'-phosphopantetheine moiety from coenzyme A to a Ser of acyl-carrier-protein. In Azorhizobium caulinodans (strain ATCC 43989 / DSM 5975 / JCM 20966 / LMG 6465 / NBRC 14845 / NCIMB 13405 / ORS 571), this protein is Holo-[acyl-carrier-protein] synthase.